We begin with the raw amino-acid sequence, 1247 residues long: SAM and SH3 domain-containing protein 1 (1247 aa).

Residues 1-39 (MEDAGAAGPGPEPEPEPEPEPEPAPEPEPEPKPGAGTSE) are disordered. A compositionally biased stretch (acidic residues) spans 13 to 28 (PEPEPEPEPEPAPEPE). Residue Ser90 is modified to Phosphoserine. 3 disordered regions span residues 126–145 (VERK…VGKG), 221–257 (AALD…ESVK), and 316–344 (FFDG…LDTW). Ser248 is modified (phosphoserine). The segment covering 331–343 (SLTTSPSSSSLDT) has biased composition (low complexity). A Phosphoserine modification is found at Ser407. The segment at 449-573 (SLGKKVKSVK…DFTPSPYDTD (125 aa)) is disordered. Composition is skewed to low complexity over residues 468-484 (KYSS…DGMP) and 505-523 (GGSV…SMSG). The segment covering 524–536 (QTVSTTDSSTSNR) has biased composition (polar residues). An SH3 domain is found at 554 to 615 (PFCGRARVHT…KFIYVDVLSE (62 aa)). Ser614 is subject to Phosphoserine. Disordered stretches follow at residues 616 to 639 (DEEK…KSVE) and 713 to 810 (DSQG…LNKN). The span at 622-631 (RPTRRRRKGR) shows a compositional bias: basic residues. An SAM 1 domain is found at 633–697 (PQPKSVEDLL…LTAVELLQEY (65 aa)). The span at 746-765 (SAKSSTEPSLKSFSRNQLGN) shows a compositional bias: polar residues. Phosphoserine is present on residues Ser821 and Ser839. Disordered stretches follow at residues 846–884 (EPGA…PLEQ), 903–946 (PQKL…LART), and 971–1065 (DAEQ…SELP). The required for interaction with TRAF6 stretch occupies residues 852 to 860 (DVPTEVTEP). The residue at position 858 (Thr858) is a Phosphothreonine. The span at 1050-1060 (GSPPSTRPPPW) shows a compositional bias: pro residues. The SAM 2 domain maps to 1177–1241 (GCISSVSDWL…LSAARLFKLP (65 aa)).

Interacts with GNAS. Interacts with IQGAP1. Interacts with TRAF6 (via C-terminus); the interaction is LPS-dependent. Interacts with MAP3K7, CHUK and IKBKB. In terms of tissue distribution, expressed ubiquitously, with highest levels in lung, placenta, spleen and thymus. Down-regulated in the majority (74%) of breast tumors in comparison with corresponding normal breast epithelial tissues. Expressed in the epidermis, epidermal keratinocytes, dermal fibroblasts and melanocytes.

It localises to the cytoplasm. Its function is as follows. Is a positive regulator of NF-kappa-B signaling downstream of TLR4 activation. It acts as a scaffold molecule to assemble a molecular complex that includes TRAF6, MAP3K7, CHUK and IKBKB, thereby facilitating NF-kappa-B signaling activation. Regulates TRAF6 and MAP3K7 ubiquitination. Involved in the regulation of cell mobility. Regulates lipolysaccharide (LPS)-induced endothelial cell migration. Is involved in the regulation of skin pigmentation through the control of melanocyte migration in the epidermis. The chain is SAM and SH3 domain-containing protein 1 (SASH1) from Homo sapiens (Human).